Here is a 141-residue protein sequence, read N- to C-terminus: Sporulation-specific cell division protein SsgB (141 aa).

The protein belongs to the SsgA family. Interacts with SsgA. Interacts with FtsZ (via N-terminus).

It is found in the cell septum. In terms of biological role, involved in sporulation-specific cell division. Required for early stages of sporulation. Important in the process of growth cessation prior to sporulation-specific cell division. Recruits cell division protein FtsZ to the future septum sites and tethers the contractile ring structure (Z ring) to the cytoplasmic membrane during sporulation. Stimulates polymerization and filament length of FtsZ in vitro. The protein is Sporulation-specific cell division protein SsgB of Saccharopolyspora erythraea (strain ATCC 11635 / DSM 40517 / JCM 4748 / NBRC 13426 / NCIMB 8594 / NRRL 2338).